The chain runs to 64 residues: Large ribosomal subunit protein bL33 (64 aa).

This sequence belongs to the bacterial ribosomal protein bL33 family.

In Microcystis aeruginosa (strain NIES-843 / IAM M-2473), this protein is Large ribosomal subunit protein bL33.